Reading from the N-terminus, the 61-residue chain is Disintegrin rubistatin (61 aa).

A Disintegrin domain is found at 1-61; sequence NPCCDAATCK…ADCPRNGLYG (61 aa). 4 disulfide bridges follow: Cys3-Cys26, Cys17-Cys23, Cys22-Cys47, and Cys35-Cys54. Residues 39–41 carry the Cell attachment site; atypical (MVD) motif; that stretch reads MVD.

It belongs to the venom metalloproteinase (M12B) family. P-II subfamily. P-IIa sub-subfamily. As to quaternary structure, monomer. Expressed by the venom gland.

The protein resides in the secreted. Functionally, recombinant disintegrin rubistatin inhibits ADP-induced platelet aggregation. In addition, it strongly induces apoptosis, and inhibits cell migration and proliferation of the human cancer cell line SK-Mel-28. This chain is Disintegrin rubistatin, found in Crotalus ruber ruber (Red diamond rattlesnake).